Consider the following 266-residue polypeptide: Interleukin-1 beta (266 aa).

Positions 1–113 (MATVPEPINE…ETSSDELLCD (113 aa)) are excised as a propeptide.

It belongs to the IL-1 family. As to quaternary structure, monomer. In its precursor form, weakly interacts with full-length MEFV; the mature cytokine does not interact at all. Interacts with integrins ITGAV:ITGBV and ITGA5:ITGB1; integrin-binding is required for IL1B signaling. Interacts with cargo receptor TMED10; the interaction is direct and is required for the secretion of IL1B mature form. Interacts with HSP90AB1; the interaction facilitates cargo translocation into the ERGIC. Interacts with HSP90B1; the interaction facilitates cargo translocation into the ERGIC.

It localises to the cytoplasm. It is found in the cytosol. The protein resides in the secreted. Its subcellular location is the lysosome. The protein localises to the extracellular exosome. Its function is as follows. Potent pro-inflammatory cytokine. Initially discovered as the major endogenous pyrogen, induces prostaglandin synthesis, neutrophil influx and activation, T-cell activation and cytokine production, B-cell activation and antibody production, and fibroblast proliferation and collagen production. Promotes Th17 differentiation of T-cells. Synergizes with IL12/interleukin-12 to induce IFNG synthesis from T-helper 1 (Th1) cells. Plays a role in angiogenesis by inducing VEGF production synergistically with TNF and IL6. Involved in transduction of inflammation downstream of pyroptosis: its mature form is specifically released in the extracellular milieu by passing through the gasdermin-D (GSDMD) pore. The protein is Interleukin-1 beta (IL1B) of Ovis aries (Sheep).